Reading from the N-terminus, the 125-residue chain is Profilin-A (125 aa).

Position 2 is an N-acetylserine (S2).

It belongs to the profilin family. Occurs in many kinds of cells as a complex with monomeric actin in a 1:1 ratio.

It localises to the cytoplasm. The protein resides in the cytoskeleton. In terms of biological role, binds to actin and affects the structure of the cytoskeleton. At high concentrations, profilin prevents the polymerization of actin, whereas it enhances it at low concentrations. By binding to PIP2, it inhibits the formation of IP3 and DG. The polypeptide is Profilin-A (PROA) (Physarum polycephalum (Slime mold)).